Consider the following 346-residue polypeptide: DNA-directed RNA polymerase subunit alpha (346 aa).

The alpha N-terminal domain (alpha-NTD) stretch occupies residues 1–233 (MLRDEVAVSA…DLFIPFLHAE (233 aa)). The segment at 268 to 346 (IELKCIFIDQ…NKFLIGNPSE (79 aa)) is alpha C-terminal domain (alpha-CTD).

It belongs to the RNA polymerase alpha chain family. As to quaternary structure, in plastids the minimal PEP RNA polymerase catalytic core is composed of four subunits: alpha, beta, beta', and beta''. When a (nuclear-encoded) sigma factor is associated with the core the holoenzyme is formed, which can initiate transcription.

It localises to the plastid. The protein resides in the chloroplast. The catalysed reaction is RNA(n) + a ribonucleoside 5'-triphosphate = RNA(n+1) + diphosphate. Its function is as follows. DNA-dependent RNA polymerase catalyzes the transcription of DNA into RNA using the four ribonucleoside triphosphates as substrates. This is DNA-directed RNA polymerase subunit alpha from Ranunculus macranthus (Large buttercup).